The primary structure comprises 237 residues: Concanavalin V (237 aa).

Positions 8 and 10 each coordinate Mn(2+). 4 residues coordinate Ca(2+): Asp-10, Tyr-12, Asn-14, and Asp-19. Asn-14 contacts a carbohydrate. Positions 19 and 24 each coordinate Mn(2+). A carbohydrate-binding positions include Gly-70, 98–100, Asp-208, and Arg-228; that span reads GLY.

This sequence belongs to the leguminous lectin family. Homotetramer. In terms of processing, concanavalin A-like lectins of the Diocleinae subtribe undergo proteolytic processing referred to as circular permutation. The propeptide is split into an N-terminal and a C-terminal part, the gamma and beta chain, respectively. These are then religated in beta-gamma order to form the mature alpha chain. The beta and gamma chains can often be detected in cell extracts. Residues 1-118 of the mature chain, as displayed here, probably constitute the beta chain in the propeptide, residues 119-237 the gamma chain.

In terms of biological role, D-mannose/D-glucose-binding lectin which binds alpha-methyl-D-mannoside, D-mannose and D-glucose in that order. Also binds to serum fetuin and ovalbumin. Has hemagglutinating activity towards rabbit erythrocytes. Is not toxic towards larvae of the brine shrimp Artemia. Induces relaxation in rat endothelized aorta. Shows a transient edematogenic effect in rat. The sequence is that of Concanavalin V from Canavalia cathartica (Jackbean).